We begin with the raw amino-acid sequence, 94 residues long: Small ribosomal subunit protein uS19c (94 aa).

The protein belongs to the universal ribosomal protein uS19 family.

It localises to the plastid. The protein resides in the chloroplast. Functionally, protein S19 forms a complex with S13 that binds strongly to the 16S ribosomal RNA. The polypeptide is Small ribosomal subunit protein uS19c (Cyanidioschyzon merolae (strain NIES-3377 / 10D) (Unicellular red alga)).